The following is a 211-amino-acid chain: MDFDFKVSGDFIVSGAEQLDDTDLTRSDEFWLIQAPLGQFPEIEENTLKIEPDKDGLFGEFKDSNAGSLHLCLGAKYDLASFHSQDAGAELIIPSEESMIVGKITRRVALVRYPEPNELLQKMKARTQQKLVGSVTNSSKKSSNLTQSSRHKSGTRSSREKSMFSGFTETPKSPKRKNSESSSGKHRSSTSTVSGSSERSAKSKKKVKKEE.

The disordered stretch occupies residues 128 to 211 (QQKLVGSVTN…KSKKKVKKEE (84 aa)). Positions 134–148 (SVTNSSKKSSNLTQS) are enriched in low complexity. Ser-173 is subject to Phosphoserine. Low complexity predominate over residues 189–198 (STSTVSGSSE). Positions 202 to 211 (KSKKKVKKEE) are enriched in basic residues.

As to quaternary structure, associated with the Mediator complex.

It localises to the nucleus. The protein is Mediator-associated protein 2 of Arabidopsis thaliana (Mouse-ear cress).